Consider the following 325-residue polypeptide: MAAAMAEQEGSKGSARNRGGVQRVEGKLRASVEKGDYYEAHQMYRTLFFRYMSQSKHIEARELMYSGALLFFSHSQRNSAADLSMLVLESLEKHEVKVTEELLENLAKLFSLMDPNSPERVAFVSRALKWSTGGSGKFGDPKLHQFLAITLWKEQNYYESRYHFLHSSDGEGCANMLVEYSSSRGYRSEVDMFVVQAVLQFLCLKNKTSASVVFTTYTQKHPSIERGPPFVQPLLNFIWFLLLAVEGGKLTVFTVLCEQYQPSLKRDPMYNEYLDRIGQLFFGLPPKQSSSYGGLLGNLLNSLMGSGEDDDVEDGQEDSSPIELD.

Disordered regions lie at residues 1–22 (MAAA…GGVQ) and 306–325 (SGED…IELD). The segment covering 307-317 (GEDDDVEDGQE) has biased composition (acidic residues).

The protein belongs to the GET4 family. As to quaternary structure, component of the bag6/bat3 complex.

Its subcellular location is the cytoplasm. It localises to the cytosol. In terms of biological role, as part of a cytosolic protein quality control complex, the bag6/bat3 complex, maintains misfolded and hydrophobic patches-containing proteins in a soluble state and participates in their proper delivery to the endoplasmic reticulum or alternatively can promote their sorting to the proteasome where they undergo degradation. The bag6/bat3 complex is involved in the post-translational delivery of tail-anchored/type II transmembrane proteins to the endoplasmic reticulum membrane. Similarly, the bag6/bat3 complex also functions as a sorting platform for proteins of the secretory pathway that are mislocalized to the cytosol either delivering them to the proteasome for degradation or to the endoplasmic reticulum. The bag6/bat3 complex also plays a role in the endoplasmic reticulum-associated degradation (ERAD), a quality control mechanism that eliminates unwanted proteins of the endoplasmic reticulum through their retrotranslocation to the cytosol and their targeting to the proteasome. It maintains these retrotranslocated proteins in an unfolded yet soluble state condition in the cytosol to ensure their proper delivery to the proteasome. This is Golgi to ER traffic protein 4 homolog B (get4-b) from Xenopus laevis (African clawed frog).